Reading from the N-terminus, the 292-residue chain is Bifunctional protein FolD (292 aa).

Residues 169–171 (GRG), T196, and V237 contribute to the NADP(+) site.

It belongs to the tetrahydrofolate dehydrogenase/cyclohydrolase family. Homodimer.

It carries out the reaction (6R)-5,10-methylene-5,6,7,8-tetrahydrofolate + NADP(+) = (6R)-5,10-methenyltetrahydrofolate + NADPH. The enzyme catalyses (6R)-5,10-methenyltetrahydrofolate + H2O = (6R)-10-formyltetrahydrofolate + H(+). It participates in one-carbon metabolism; tetrahydrofolate interconversion. In terms of biological role, catalyzes the oxidation of 5,10-methylenetetrahydrofolate to 5,10-methenyltetrahydrofolate and then the hydrolysis of 5,10-methenyltetrahydrofolate to 10-formyltetrahydrofolate. The protein is Bifunctional protein FolD of Bifidobacterium longum (strain NCC 2705).